We begin with the raw amino-acid sequence, 275 residues long: NH(3)-dependent NAD(+) synthetase (275 aa).

47 to 54 (GISGGQDS) is a binding site for ATP. Asp53 provides a ligand contact to Mg(2+). Arg139 is a binding site for deamido-NAD(+). Thr159 is a binding site for ATP. Glu164 serves as a coordination point for Mg(2+). Residues Lys172 and Asp179 each coordinate deamido-NAD(+). ATP-binding residues include Lys188 and Thr210. 259-260 (HK) serves as a coordination point for deamido-NAD(+).

Belongs to the NAD synthetase family. In terms of assembly, homodimer.

The catalysed reaction is deamido-NAD(+) + NH4(+) + ATP = AMP + diphosphate + NAD(+) + H(+). It participates in cofactor biosynthesis; NAD(+) biosynthesis; NAD(+) from deamido-NAD(+) (ammonia route): step 1/1. Its function is as follows. Catalyzes the ATP-dependent amidation of deamido-NAD to form NAD. Uses ammonia as a nitrogen source. The polypeptide is NH(3)-dependent NAD(+) synthetase (Staphylococcus epidermidis (strain ATCC 35984 / DSM 28319 / BCRC 17069 / CCUG 31568 / BM 3577 / RP62A)).